Consider the following 494-residue polypeptide: UDP-N-acetylmuramate--L-alanine ligase (494 aa).

122 to 128 serves as a coordination point for ATP; the sequence is GTHGKTT.

The protein belongs to the MurCDEF family.

It is found in the cytoplasm. It catalyses the reaction UDP-N-acetyl-alpha-D-muramate + L-alanine + ATP = UDP-N-acetyl-alpha-D-muramoyl-L-alanine + ADP + phosphate + H(+). It participates in cell wall biogenesis; peptidoglycan biosynthesis. Its function is as follows. Cell wall formation. The chain is UDP-N-acetylmuramate--L-alanine ligase from Mycobacterium bovis (strain ATCC BAA-935 / AF2122/97).